The primary structure comprises 164 residues: Phosphopantetheine adenylyltransferase (164 aa).

S9 provides a ligand contact to substrate. ATP is bound by residues 9 to 10 (SF) and H17. Substrate is bound by residues K41, L73, and K87. ATP contacts are provided by residues 88–90 (GLR), E98, and 122–128 (YSYLSSS).

Belongs to the bacterial CoaD family. Homohexamer. Mg(2+) is required as a cofactor.

The protein localises to the cytoplasm. It carries out the reaction (R)-4'-phosphopantetheine + ATP + H(+) = 3'-dephospho-CoA + diphosphate. The protein operates within cofactor biosynthesis; coenzyme A biosynthesis; CoA from (R)-pantothenate: step 4/5. Reversibly transfers an adenylyl group from ATP to 4'-phosphopantetheine, yielding dephospho-CoA (dPCoA) and pyrophosphate. The sequence is that of Phosphopantetheine adenylyltransferase from Rhodococcus jostii (strain RHA1).